The primary structure comprises 427 residues: Glutamate-1-semialdehyde 2,1-aminomutase (427 aa).

Position 265 is an N6-(pyridoxal phosphate)lysine (Lys265).

It belongs to the class-III pyridoxal-phosphate-dependent aminotransferase family. HemL subfamily. Homodimer. Requires pyridoxal 5'-phosphate as cofactor.

Its subcellular location is the cytoplasm. The catalysed reaction is (S)-4-amino-5-oxopentanoate = 5-aminolevulinate. Its pathway is porphyrin-containing compound metabolism; protoporphyrin-IX biosynthesis; 5-aminolevulinate from L-glutamyl-tRNA(Glu): step 2/2. The protein is Glutamate-1-semialdehyde 2,1-aminomutase of Burkholderia ambifaria (strain ATCC BAA-244 / DSM 16087 / CCUG 44356 / LMG 19182 / AMMD) (Burkholderia cepacia (strain AMMD)).